The following is a 70-amino-acid chain: Large ribosomal subunit protein eL38 (70 aa).

Belongs to the eukaryotic ribosomal protein eL38 family.

The chain is Large ribosomal subunit protein eL38 (RpL38) from Julodis onopordi (Jewel beetle).